The chain runs to 260 residues: Small ribosomal subunit protein uS3 (260 aa).

The KH type-2 domain occupies 39–114 (LRQYIEQKLG…QIRINVVEVQ (76 aa)). Residues 219–260 (EVAAPPPSTRDRDRDRGDRDREPRRRQQQRRRQQFEDRSNEG) are disordered. 2 stretches are compositionally biased toward basic and acidic residues: residues 227–243 (TRDR…EPRR) and 251–260 (QQFEDRSNEG).

Belongs to the universal ribosomal protein uS3 family. As to quaternary structure, part of the 30S ribosomal subunit. Forms a tight complex with proteins S10 and S14.

Functionally, binds the lower part of the 30S subunit head. Binds mRNA in the 70S ribosome, positioning it for translation. The sequence is that of Small ribosomal subunit protein uS3 from Trichormus variabilis (strain ATCC 29413 / PCC 7937) (Anabaena variabilis).